The chain runs to 413 residues: Glucose-1-phosphate adenylyltransferase (413 aa).

Residues tyrosine 102, glycine 167, 182–183, and serine 200 contribute to the alpha-D-glucose 1-phosphate site; that span reads EK.

Belongs to the bacterial/plant glucose-1-phosphate adenylyltransferase family. As to quaternary structure, homotetramer.

It catalyses the reaction alpha-D-glucose 1-phosphate + ATP + H(+) = ADP-alpha-D-glucose + diphosphate. It functions in the pathway glycan biosynthesis; glycogen biosynthesis. In terms of biological role, involved in the biosynthesis of ADP-glucose, a building block required for the elongation reactions to produce glycogen. Catalyzes the reaction between ATP and alpha-D-glucose 1-phosphate (G1P) to produce pyrophosphate and ADP-Glc. The sequence is that of Glucose-1-phosphate adenylyltransferase from Deinococcus geothermalis (strain DSM 11300 / CIP 105573 / AG-3a).